We begin with the raw amino-acid sequence, 408 residues long: Probable 2,3-bisphosphoglycerate-independent phosphoglycerate mutase (408 aa).

Belongs to the BPG-independent phosphoglycerate mutase family. A-PGAM subfamily.

It catalyses the reaction (2R)-2-phosphoglycerate = (2R)-3-phosphoglycerate. The protein operates within carbohydrate degradation; glycolysis; pyruvate from D-glyceraldehyde 3-phosphate: step 3/5. Functionally, catalyzes the interconversion of 2-phosphoglycerate and 3-phosphoglycerate. The chain is Probable 2,3-bisphosphoglycerate-independent phosphoglycerate mutase from Deinococcus geothermalis (strain DSM 11300 / CIP 105573 / AG-3a).